We begin with the raw amino-acid sequence, 604 residues long: Elongation factor 4 (604 aa).

The tr-type G domain occupies 7-189; the sequence is SRLRNFCIIA…AVVDRIPPPA (183 aa). Residues 19-24 and 136-139 contribute to the GTP site; these read DHGKST and NKID.

The protein belongs to the TRAFAC class translation factor GTPase superfamily. Classic translation factor GTPase family. LepA subfamily.

It localises to the cell inner membrane. It catalyses the reaction GTP + H2O = GDP + phosphate + H(+). In terms of biological role, required for accurate and efficient protein synthesis under certain stress conditions. May act as a fidelity factor of the translation reaction, by catalyzing a one-codon backward translocation of tRNAs on improperly translocated ribosomes. Back-translocation proceeds from a post-translocation (POST) complex to a pre-translocation (PRE) complex, thus giving elongation factor G a second chance to translocate the tRNAs correctly. Binds to ribosomes in a GTP-dependent manner. The protein is Elongation factor 4 of Prochlorococcus marinus (strain MIT 9313).